A 494-amino-acid chain; its full sequence is Cheilanthifoline synthase (494 aa).

Residues 4 to 24 form a helical membrane-spanning segment; the sequence is TIWLIISTVIIVLGIAKFLLG. Cys-437 contributes to the heme binding site.

This sequence belongs to the cytochrome P450 family. Heme is required as a cofactor. Expressed in roots and at lower levels in stems, leaves and plantlets.

The protein localises to the endoplasmic reticulum membrane. It catalyses the reaction (S)-scoulerine + reduced [NADPH--hemoprotein reductase] + O2 = (S)-cheilanthifoline + oxidized [NADPH--hemoprotein reductase] + 2 H2O + H(+). In terms of biological role, methylenedioxy bridge-forming cytochrome P450 involved in the biosynthesis of isoquinoline alkaloids. Converts (S)-scoulerine into (S)-cheilanthifoline, a precursor of sanguinarine. Catalyzes an oxidative reaction that does not incorporate oxygen into the product. The polypeptide is Cheilanthifoline synthase (Argemone mexicana (Mexican prickly poppy)).